The chain runs to 75 residues: Small ribosomal subunit protein bS18 (75 aa).

It belongs to the bacterial ribosomal protein bS18 family. As to quaternary structure, part of the 30S ribosomal subunit. Forms a tight heterodimer with protein bS6.

Binds as a heterodimer with protein bS6 to the central domain of the 16S rRNA, where it helps stabilize the platform of the 30S subunit. The polypeptide is Small ribosomal subunit protein bS18 (Laribacter hongkongensis (strain HLHK9)).